A 293-amino-acid chain; its full sequence is MIQRPTFFSPIHLLAVLLATFILITGCHRETKKNADDGMPVEHLYDKAHTLMKKGNWAGAELSFKRLIAQYPYGPYTEQAMVENAYAQYKSGKHDDAVSSIDRFIRTYPTHHNIPYMYYLRGLSNSNRDTIFLRKVWSLDLSRRDLSAPQQAYNDFKTVLDRYPNSRYATDAKKQMTELRNMFAQYEMNVTLYYLRRTAWVAAAGRANFLLETYPQSPFQYDAVAALGEAYTHLGNKTLADNARQVLQTNAPDHPWLKGKKWPKYPAAIRKLNPFAGEKSAATGQTNAVVNSN.

A signal peptide spans Met1–Gly26. The N-palmitoyl cysteine moiety is linked to residue Cys27. The S-diacylglycerol cysteine moiety is linked to residue Cys27.

The protein belongs to the BamD family. As to quaternary structure, part of the Bam complex.

The protein localises to the cell outer membrane. Functionally, part of the outer membrane protein assembly complex, which is involved in assembly and insertion of beta-barrel proteins into the outer membrane. This chain is Outer membrane protein assembly factor BamD, found in Xylella fastidiosa (strain Temecula1 / ATCC 700964).